A 293-amino-acid chain; its full sequence is ATP synthase gamma chain (293 aa).

It belongs to the ATPase gamma chain family. In terms of assembly, F-type ATPases have 2 components, CF(1) - the catalytic core - and CF(0) - the membrane proton channel. CF(1) has five subunits: alpha(3), beta(3), gamma(1), delta(1), epsilon(1). CF(0) has three main subunits: a, b and c.

It is found in the cell inner membrane. Its function is as follows. Produces ATP from ADP in the presence of a proton gradient across the membrane. The gamma chain is believed to be important in regulating ATPase activity and the flow of protons through the CF(0) complex. In Beijerinckia indica subsp. indica (strain ATCC 9039 / DSM 1715 / NCIMB 8712), this protein is ATP synthase gamma chain.